The chain runs to 455 residues: MTSDSTVDKILAGKYPAKQHAENVVERLLHVHPDLTDGVIYLESQRSKLYENSDQEVPFRQRRYFYYLSGCDLADSYLTYSIRDRKLTLFIPPIDPASVLWSGLPLSNSEALEKYDVDEVLPTSATALPTTSYSSLMFVIESQTSRTFHLQNTESLEPAIERARAIKDEYEVALIKKANRISALAHHSCLRAIKSAGNEREIEAVFTKECIANGAPKQAYSGIFGSGRSASTLHYVHNNQPLAGKLNLLLDAGAEYNNYASDITRTFPISGQFTKESREVYDIVLDMQKQCLAASKAGAVWDDIHILAHKVAIQGLLKIGVLRNGSVDEILSNRTSTAFLPHGLGHYLGMDTHDCGGNPNYADPDPMFKYLRKRGPLPAGAVITVEPGIYFCEFIIKPYLEDEKHAKYIDKDVLNRYWDVGGVRIEDNILITEGGYENLTNVAKEVDDMLKFING.

Mn(2+) contacts are provided by D251, D262, E386, and E426.

It belongs to the peptidase M24B family. The cofactor is Mn(2+).

It catalyses the reaction Release of any N-terminal amino acid, including proline, that is linked to proline, even from a dipeptide or tripeptide.. Functionally, catalyzes the removal of a penultimate prolyl residue from the N-termini of peptides. The polypeptide is Probable Xaa-Pro aminopeptidase GSTUM_00008071001 (Tuber melanosporum (strain Mel28) (Perigord black truffle)).